Reading from the N-terminus, the 121-residue chain is Large ribosomal subunit protein bL12 (121 aa).

It belongs to the bacterial ribosomal protein bL12 family. As to quaternary structure, homodimer. Part of the ribosomal stalk of the 50S ribosomal subunit. Forms a multimeric L10(L12)X complex, where L10 forms an elongated spine to which 2 to 4 L12 dimers bind in a sequential fashion. Binds GTP-bound translation factors.

In terms of biological role, forms part of the ribosomal stalk which helps the ribosome interact with GTP-bound translation factors. Is thus essential for accurate translation. The polypeptide is Large ribosomal subunit protein bL12 (Baumannia cicadellinicola subsp. Homalodisca coagulata).